The chain runs to 579 residues: MSASSLLEQRPKGQGNKVQNGSVHQKDGLNDDDFEPYLSPQARPNNAYTAMSDSYLPSYYSPSIGFSYSLGEAAWSTGGDTAMPYLTSYGQLSNGEPHFLPDAMFGQPGALGSTPFLGQHGFNFFPSGIDFSAWGNNSSQGQSTQSSGYSSNYAYAPSSLGGAMIDGQSAFANETLNKAPGMNTIDQGMAALKLGSTEVASNVPKVVGSAVGSGSITSNIVASNSLPPATIAPPKPASWADIASKPAKQQPKLKTKNGIAGSSLPPPPIKHNMDIGTWDNKGPVAKAPSQALVQNIGQPTQGSPQPVGQQANNSPPVAQASVGQQTQPLPPPPPQPAQLSVQQQAAQPTRWVAPRNRGSGFGHNGVDGNGVGQSQAGSGSTPSEPHPVLEKLRSINNYNPKDFDWNLKHGRVFIIKSYSEDDIHRSIKYNIWCSTEHGNKRLDAAYRSMNGKGPVYLLFSVNGSGHFCGVAEMKSAVDYNTCAGVWSQDKWKGRFDVRWIFVKDVPNSQLRHIRLENNENKPVTNSRDTQEVPLEKAKQVLKIIASYKHTTSIFDDFSHYEKRQEEEESVKKERQGRGK.

A disordered region spans residues 1–45; that stretch reads MSASSLLEQRPKGQGNKVQNGSVHQKDGLNDDDFEPYLSPQARPN. An N-acetylserine modification is found at serine 2. 6 positions are modified to phosphoserine: serine 2, serine 4, serine 5, serine 22, serine 39, and serine 196. Residues 2-384 form a localization to mRNA processing bodies (P-bodies) region; the sequence is SASSLLEQRP…QAGSGSTPSE (383 aa). Positions 247-387 are disordered; that stretch reads AKQQPKLKTK…SGSTPSEPHP (141 aa). Residues 291-316 show a composition bias toward polar residues; it reads ALVQNIGQPTQGSPQPVGQQANNSPP. Low complexity predominate over residues 337-349; the sequence is AQLSVQQQAAQPT. A Phosphoserine modification is found at serine 359. Positions 359-371 are enriched in gly residues; sequence SGFGHNGVDGNGV. Over residues 372–383 the composition is skewed to polar residues; the sequence is GQSQAGSGSTPS. The interval 385–579 is interaction with m6A-containing mRNAs; that stretch reads PHPVLEKLRS…VKKERQGRGK (195 aa). Serine 394 bears the Phosphoserine mark. The YTH domain maps to 410–544; that stretch reads GRVFIIKSYS…EKAKQVLKII (135 aa). Residues 416-418, aspartate 422, 432-433, asparagine 462, tryptophan 486, and tryptophan 491 contribute to the RNA site; these read KSY and WC.

Belongs to the YTHDF family. YTHDF2 subfamily. In terms of assembly, interacts with CNOT1; interaction is direct and promotes recruitment of the CCR4-NOT complex. Interacts with YTHDF3. Interacts with RIDA/HRSP12; interaction leads to recruitment of the ribonuclease P/MRP complex. In terms of processing, ubiquitinated by the SCF(SKP2) complex, leading to its degradation. Highly expressed in induced pluripotent stem cells (iPSCs) and down-regulated during neural differentiation.

Its subcellular location is the cytoplasm. It is found in the cytosol. The protein resides in the P-body. The protein localises to the stress granule. It localises to the nucleus. Its function is as follows. Specifically recognizes and binds N6-methyladenosine (m6A)-containing RNAs, and regulates their stability. M6A is a modification present at internal sites of mRNAs and some non-coding RNAs and plays a role in mRNA stability and processing. Acts as a regulator of mRNA stability by promoting degradation of m6A-containing mRNAs via interaction with the CCR4-NOT and ribonuclease P/MRP complexes, depending on the context. The YTHDF paralogs (YTHDF1, YTHDF2 and YTHDF3) share m6A-containing mRNAs targets and act redundantly to mediate mRNA degradation and cellular differentiation. M6A-containing mRNAs containing a binding site for RIDA/HRSP12 (5'-GGUUC-3') are preferentially degraded by endoribonucleolytic cleavage: cooperative binding of RIDA/HRSP12 and YTHDF2 to transcripts leads to recruitment of the ribonuclease P/MRP complex. Other m6A-containing mRNAs undergo deadenylation via direct interaction between YTHDF2 and CNOT1, leading to recruitment of the CCR4-NOT and subsequent deadenylation of m6A-containing mRNAs. Required maternally to regulate oocyte maturation: probably acts by binding to m6A-containing mRNAs, thereby regulating maternal transcript dosage during oocyte maturation, which is essential for the competence of oocytes to sustain early zygotic development. Also required during spermatogenesis: regulates spermagonial adhesion by promoting degradation of m6A-containing transcripts coding for matrix metallopeptidases. Also involved in hematopoietic stem cells specification by binding to m6A-containing mRNAs, leading to promote their degradation. Also acts as a regulator of neural development by promoting m6A-dependent degradation of neural development-related mRNA targets. Inhibits neural specification of induced pluripotent stem cells by binding to methylated neural-specific mRNAs and promoting their degradation, thereby restraining neural differentiation. Regulates circadian regulation of hepatic lipid metabolism: acts by promoting m6A-dependent degradation of PPARA transcripts. Regulates the innate immune response to infection by inhibiting the type I interferon response: acts by binding to m6A-containing IFNB transcripts and promoting their degradation. May also act as a promoter of cap-independent mRNA translation following heat shock stress: upon stress, relocalizes to the nucleus and specifically binds mRNAs with some m6A methylation mark at their 5'-UTR, protecting demethylation of mRNAs by FTO, thereby promoting cap-independent mRNA translation. Regulates mitotic entry by promoting the phase-specific m6A-dependent degradation of WEE1 transcripts. Promotes formation of phase-separated membraneless compartments, such as P-bodies or stress granules, by undergoing liquid-liquid phase separation upon binding to mRNAs containing multiple m6A-modified residues: polymethylated mRNAs act as a multivalent scaffold for the binding of YTHDF proteins, juxtaposing their disordered regions and thereby leading to phase separation. The resulting mRNA-YTHDF complexes then partition into different endogenous phase-separated membraneless compartments, such as P-bodies, stress granules or neuronal RNA granules. May also recognize and bind RNAs modified by C5-methylcytosine (m5C) and act as a regulator of rRNA processing. (Microbial infection) Promotes viral gene expression and replication of polyomavirus SV40: acts by binding to N6-methyladenosine (m6A)-containing viral RNAs. Functionally, (Microbial infection) Promotes viral gene expression and virion production of kaposis sarcoma-associated herpesvirus (KSHV) at some stage of the KSHV life cycle (in iSLK.219 and iSLK.BAC16 cells). Acts by binding to N6-methyladenosine (m6A)-containing viral RNAs. The sequence is that of YTH domain-containing family protein 2 from Homo sapiens (Human).